We begin with the raw amino-acid sequence, 129 residues long: Ergosterol biosynthetic protein 28 (129 aa).

The next 4 helical transmembrane spans lie at 4 to 24, 46 to 66, 71 to 91, and 96 to 116; these read LGYWLMVVGSLRLASVWFGFF, TFGVWTLLTCTLCFLCAFNLE, YLATFLSFIYALGHFLTEYLF, and TIANLSTVGFFAGTSIVWMLL.

The protein belongs to the ERG28 family.

The protein localises to the endoplasmic reticulum membrane. This is Ergosterol biosynthetic protein 28 from Arabidopsis thaliana (Mouse-ear cress).